A 291-amino-acid chain; its full sequence is Phosphate import ATP-binding protein PstB (291 aa).

The ABC transporter domain maps to 45–286; sequence YSTQNLDLWY…PADKQTEDYI (242 aa). 77 to 84 contacts ATP; the sequence is GPSGCGKS.

It belongs to the ABC transporter superfamily. Phosphate importer (TC 3.A.1.7) family. The complex is composed of two ATP-binding proteins (PstB), two transmembrane proteins (PstC and PstA) and a solute-binding protein (PstS).

The protein resides in the cell membrane. The enzyme catalyses phosphate(out) + ATP + H2O = ADP + 2 phosphate(in) + H(+). Its function is as follows. Part of the ABC transporter complex PstSACB involved in phosphate import. Responsible for energy coupling to the transport system. The polypeptide is Phosphate import ATP-binding protein PstB (Staphylococcus epidermidis (strain ATCC 35984 / DSM 28319 / BCRC 17069 / CCUG 31568 / BM 3577 / RP62A)).